A 278-amino-acid polypeptide reads, in one-letter code: Diaminopimelate epimerase (278 aa).

Substrate is bound by residues Asn13, Gln49, and Asn68. The active-site Proton donor is Cys77. Residues 78-79 (GN), Asn161, Asn194, and 212-213 (ER) contribute to the substrate site. The active-site Proton acceptor is Cys221. A substrate-binding site is contributed by 222-223 (GT).

It belongs to the diaminopimelate epimerase family. As to quaternary structure, homodimer.

Its subcellular location is the cytoplasm. The enzyme catalyses (2S,6S)-2,6-diaminopimelate = meso-2,6-diaminopimelate. It participates in amino-acid biosynthesis; L-lysine biosynthesis via DAP pathway; DL-2,6-diaminopimelate from LL-2,6-diaminopimelate: step 1/1. Its function is as follows. Catalyzes the stereoinversion of LL-2,6-diaminopimelate (L,L-DAP) to meso-diaminopimelate (meso-DAP), a precursor of L-lysine and an essential component of the bacterial peptidoglycan. The chain is Diaminopimelate epimerase from Nitrosomonas eutropha (strain DSM 101675 / C91 / Nm57).